Reading from the N-terminus, the 913-residue chain is Cadherin-4 (913 aa).

An N-terminal signal peptide occupies residues 1–19 (MRTGSRLLLVLLVWGSAAA). A propeptide spanning residues 20 to 166 (LNGDLTVRPT…SAKGLRRQKR (147 aa)) is cleaved from the precursor. 5 Cadherin domains span residues 167–274 (DWVI…RPEF), 275–389 (INQV…PPEF), 390–504 (TTST…APYF), 505–610 (PTNH…DNAP), and 611–721 (ELLP…TIGA). The Extracellular portion of the chain corresponds to 167–731 (DWVIPPINVP…VAAAGLGTGA (565 aa)). 6 N-linked (GlcNAc...) asparagine glycosylation sites follow: asparagine 280, asparagine 409, asparagine 554, asparagine 629, asparagine 658, and asparagine 699. The helical transmembrane segment at 732-753 (IIAILICIIILLTMVLLFVVWM) threads the bilayer. The Cytoplasmic portion of the chain corresponds to 754-913 (KRREKERHTK…ADMYGGGEED (160 aa)).

As to expression, embryonic brain and neuronal retina.

It localises to the cell membrane. Its function is as follows. Cadherins are calcium-dependent cell adhesion proteins. They preferentially interact with themselves in a homophilic manner in connecting cells; cadherins may thus contribute to the sorting of heterogeneous cell types. May play an important role in retinal development. In Gallus gallus (Chicken), this protein is Cadherin-4 (CDH4).